Consider the following 362-residue polypeptide: Divinyl chlorophyll a/b light-harvesting protein PcbF (362 aa).

6 helical membrane-spanning segments follow: residues 27–47, 89–109, 150–170, 211–231, 251–271, and 316–336; these read FIGS…ANTL, IAFI…AGLL, FILG…VEWA, VMGG…FHIA, AVLS…AFWC, and LANV…WHAI.

Belongs to the PsbB/PsbC family. IsiA/Pcb subfamily. In terms of assembly, the antenna complex consists of divinyl chlorophylls (a and b) and divinyl chlorophyll a/b binding proteins and binds more divinyl chlorophyll b than does the antenna complex from high-light-adapted Prochlorococcus. Requires divinyl chlorophyll a as cofactor. Divinyl chlorophyll b is required as a cofactor.

The protein resides in the cellular thylakoid membrane. Its function is as follows. The antenna complex functions as a light receptor, it captures and delivers excitation energy to photosystems II and I. The Prochlorales pcb genes are not related to higher plant LHCs. This chain is Divinyl chlorophyll a/b light-harvesting protein PcbF (pcbF), found in Prochlorococcus marinus (strain NATL2A).